Consider the following 389-residue polypeptide: Putative F-box/kelch-repeat protein At4g35120 (389 aa).

The F-box domain occupies 24-70; the sequence is SMSISSLPDEIVLSFLALISKSYYRSLSLVSKSFYSLLSSTEIYAAR. 3 Kelch repeats span residues 128 to 174, 176 to 225, and 227 to 273; these read EIYK…FLDG, IYVI…AVSG, and RLYV…MKPI.

The polypeptide is Putative F-box/kelch-repeat protein At4g35120 (Arabidopsis thaliana (Mouse-ear cress)).